The sequence spans 93 residues: Protein S100-A5 (93 aa).

2 EF-hand domains span residues 12 to 47 (MVTTFHKYSGREGSKLTLSRKELKELIKTELSLAEK) and 48 to 83 (MKESSIDNLMKSLDKNSDQEIDFKEYSVFLTTLCMA). Residues T28, E33, D61, N63, D65, E67, and E72 each coordinate Ca(2+).

The protein belongs to the S-100 family. Homodimer.

In terms of biological role, binds calcium, zinc and copper. One subunit can simultaneously bind 2 calcium ions or 2 copper ions plus 1 zinc ion. Calcium and copper ions compete for the same binding sites. This chain is Protein S100-A5 (S100a5), found in Mus musculus (Mouse).